The chain runs to 66 residues: UPF0370 protein YpfN (66 aa).

A helical membrane pass occupies residues 4–24; that stretch reads LAKYWWILVLVFLVGVLLNVI. Positions 39–66 are disordered; sequence KPELPPHRDFNDKWDDEDGWPKKDQPKK. Positions 42–66 are enriched in basic and acidic residues; it reads LPPHRDFNDKWDDEDGWPKKDQPKK.

This sequence belongs to the UPF0370 family.

It is found in the cell membrane. This chain is UPF0370 protein YpfN, found in Salmonella paratyphi B (strain ATCC BAA-1250 / SPB7).